A 75-amino-acid polypeptide reads, in one-letter code: Large ribosomal subunit protein bL31 (75 aa).

The protein belongs to the bacterial ribosomal protein bL31 family. Type A subfamily. As to quaternary structure, part of the 50S ribosomal subunit.

Functionally, binds the 23S rRNA. This chain is Large ribosomal subunit protein bL31, found in Pelodictyon phaeoclathratiforme (strain DSM 5477 / BU-1).